Consider the following 28-residue polypeptide: KKCLTKYSAGLQTSQTCPAGQKICFKKW.

A disulfide bridge links Cys3 with Cys24.

It belongs to the three-finger toxin family. Short-chain subfamily. Expressed by the venom gland.

It localises to the secreted. In terms of biological role, binds and may inhibit nicotinic acetylcholine receptors (nAChR). The chain is Nicotinic acetylcholine receptor-binding protein Mnn-3C from Micrurus nigrocinctus (Central American coral snake).